Reading from the N-terminus, the 316-residue chain is Neuroguidin (316 aa).

Disordered regions lie at residues 143 to 172 and 280 to 316; these read SEAD…VKKY and SALT…RKRH. Over residues 145–157 the composition is skewed to acidic residues; that stretch reads ADEGESDSGEDCA. Over residues 297–316 the composition is skewed to basic residues; the sequence is KKSRKGPKKSKKRKGFRKRH.

Belongs to the SAS10 family. As to quaternary structure, part of the small subunit (SSU) processome, composed of more than 70 proteins and the RNA chaperone small nucleolar RNA (snoRNA) U3.

Its subcellular location is the nucleus. It localises to the nucleolus. The protein resides in the chromosome. It is found in the centromere. The protein localises to the cytoplasm. Its subcellular location is the cell projection. It localises to the axon. The protein resides in the dendrite. It is found in the filopodium. Its function is as follows. Part of the small subunit (SSU) processome, first precursor of the small eukaryotic ribosomal subunit. During the assembly of the SSU processome in the nucleolus, many ribosome biogenesis factors, an RNA chaperone and ribosomal proteins associate with the nascent pre-rRNA and work in concert to generate RNA folding, modifications, rearrangements and cleavage as well as targeted degradation of pre-ribosomal RNA by the RNA exosome. Its dissociation from the complex determines the transition from state pre-A1 to state pre-A1*. May inhibit mRNA translation. This chain is Neuroguidin (ngdn), found in Xenopus tropicalis (Western clawed frog).